A 272-amino-acid polypeptide reads, in one-letter code: Large ribosomal subunit protein uL4 (272 aa).

It belongs to the universal ribosomal protein uL4 family. As to quaternary structure, part of the 50S ribosomal subunit.

Its function is as follows. One of the primary rRNA binding proteins, this protein initially binds near the 5'-end of the 23S rRNA. It is important during the early stages of 50S assembly. It makes multiple contacts with different domains of the 23S rRNA in the assembled 50S subunit and ribosome. In terms of biological role, forms part of the polypeptide exit tunnel. In Aeropyrum pernix (strain ATCC 700893 / DSM 11879 / JCM 9820 / NBRC 100138 / K1), this protein is Large ribosomal subunit protein uL4.